We begin with the raw amino-acid sequence, 92 residues long: Indole-3-acetic acid-induced protein ARG7 (92 aa).

The protein belongs to the ARG7 family.

The polypeptide is Indole-3-acetic acid-induced protein ARG7 (ARG7) (Vigna radiata var. radiata (Mung bean)).